Reading from the N-terminus, the 885-residue chain is Leucine--tRNA ligase (885 aa).

The 'HIGH' region signature appears at 48 to 58; the sequence is PYPSGKLHMGH. A 'KMSKS' region motif is present at residues 639–643; it reads TMSKS. Lys642 is an ATP binding site.

This sequence belongs to the class-I aminoacyl-tRNA synthetase family.

It is found in the cytoplasm. It catalyses the reaction tRNA(Leu) + L-leucine + ATP = L-leucyl-tRNA(Leu) + AMP + diphosphate. This is Leucine--tRNA ligase from Bordetella bronchiseptica (strain ATCC BAA-588 / NCTC 13252 / RB50) (Alcaligenes bronchisepticus).